We begin with the raw amino-acid sequence, 617 residues long: UvrABC system protein C (617 aa).

A GIY-YIG domain is found at 22 to 100 (NLPGVYRFFN…IKALSPKYNI (79 aa)). One can recognise a UVR domain in the interval 209–244 (DELTRTLQHKMQTAAANLQFEEAARYRDQIQALGIM).

The protein belongs to the UvrC family. As to quaternary structure, interacts with UvrB in an incision complex.

The protein resides in the cytoplasm. Its function is as follows. The UvrABC repair system catalyzes the recognition and processing of DNA lesions. UvrC both incises the 5' and 3' sides of the lesion. The N-terminal half is responsible for the 3' incision and the C-terminal half is responsible for the 5' incision. In Neisseria meningitidis serogroup B (strain ATCC BAA-335 / MC58), this protein is UvrABC system protein C.